A 988-amino-acid chain; its full sequence is DNA-binding protein SMUBP-2 (988 aa).

Position 2 is an N-acetylalanine (A2). ATP contacts are provided by residues 213-220 (GPPGTGKT), Q402, Y441, and E570. The interval 637–783 (TAFEYLDDIV…KARHITVSRR (147 aa)) is SS DNA-binding. 3 disordered regions span residues 651–722 (THEG…GGTD), 765–820 (LKHD…PHGS), and 835–872 (RQQG…ALPS). Residues 702 to 718 (SQVQPQHSSKANGSDRT) are compositionally biased toward polar residues. The R3H domain occupies 721–784 (TDRTEHFRAM…ARHITVSRRS (64 aa)). Over residues 765-775 (LKHDSTGEGKA) the composition is skewed to basic and acidic residues. Phosphoserine is present on residues S797 and S800. Over residues 802–817 (AQAEPEPQVEQPVGQP) the composition is skewed to low complexity. The span at 835–844 (RQQGCQAQSQ) shows a compositional bias: polar residues. The Nuclear localization signal motif lies at 857–861 (KKKKK). Residues 884 to 933 (VKADNTCSFTKCSASTTTLGQFCMHCSRRYCLSHHLPEIHGCGEKARAHA) form an AN1-type zinc finger. The Zn(2+) site is built by C890, C895, C906, C909, C914, H917, H923, and C925. Residues 943–988 (LYAGSGTKDRALDPAKRAQLQRKLDKKLGELSSQRTSKKKEKERGT) form a disordered region. Residues 949–971 (TKDRALDPAKRAQLQRKLDKKLG) are compositionally biased toward basic and acidic residues. Residues 957–986 (AKRAQLQRKLDKKLGELSSQRTSKKKEKER) adopt a coiled-coil conformation.

This sequence belongs to the DNA2/NAM7 helicase family. Homooligomer. Interacts with RUVBL1. Interacts with RUVBL2. Interacts with GTF3C1. Interacts with ABT1. Interacts with ribosomes. Expressed in liver, skin, muscle, heart, brain, spleen and kidney.

The protein resides in the nucleus. The protein localises to the cytoplasm. It localises to the cell projection. It is found in the axon. It carries out the reaction ATP + H2O = ADP + phosphate + H(+). 5' to 3' helicase that unwinds RNA and DNA duplexes in an ATP-dependent reaction. Specific to 5'-phosphorylated single-stranded guanine-rich sequences. May play a role in RNA metabolism, ribosome biogenesis or initiation of translation. May play a role in regulation of transcription. Interacts with tRNA-Tyr. In Rattus norvegicus (Rat), this protein is DNA-binding protein SMUBP-2 (Ighmbp2).